Here is a 513-residue protein sequence, read N- to C-terminus: GMP synthase [glutamine-hydrolyzing] (513 aa).

One can recognise a Glutamine amidotransferase type-1 domain in the interval 8–198 (KIIVLDYGSQ…ALNTCGAKGN (191 aa)). Cysteine 85 (nucleophile) is an active-site residue. Catalysis depends on residues histidine 172 and glutamate 174. Residues 199-388 (WSMENFIDMQ…LGMPDEIVWR (190 aa)) form the GMPS ATP-PPase domain. 226–232 (SGGVDSS) contacts ATP.

Homodimer.

The catalysed reaction is XMP + L-glutamine + ATP + H2O = GMP + L-glutamate + AMP + diphosphate + 2 H(+). It functions in the pathway purine metabolism; GMP biosynthesis; GMP from XMP (L-Gln route): step 1/1. In terms of biological role, catalyzes the synthesis of GMP from XMP. In Lactococcus lactis subsp. cremoris (strain SK11), this protein is GMP synthase [glutamine-hydrolyzing].